Reading from the N-terminus, the 278-residue chain is HTH-type transcriptional activator RhaS (278 aa).

In terms of domain architecture, HTH araC/xylS-type spans 174–272; sequence NLLLAWLEDH…NWSPRDIRQG (99 aa). DNA-binding regions (H-T-H motif) lie at residues 191–212 and 239–262; these read DAVA…KQQT and VTDI…RREF.

Binds DNA as a dimer.

It localises to the cytoplasm. Activates expression of the rhaBAD and rhaT operons. The polypeptide is HTH-type transcriptional activator RhaS (Escherichia coli O157:H7).